The following is a 291-amino-acid chain: uncharacterized protein (291 aa).

Helical transmembrane passes span 1 to 21 (MHNLIFAILCSVAVSVLLKIA), 26 to 46 (IIIEQAIAFNYITAITFSYFL), 67 to 87 (PIFLALGLLLPSVFIIMSKAV), 95 to 115 (SDAAQRLSLFLPILAAFLIFH), 117 to 137 (TLSQSKIIGVVLAFIGLFCLL), 149 to 169 (FKGVLGLIGVWFGYGIIDILF), 179 to 199 (FPATLFISFSLAACVMFIYLF), 208 to 228 (SSVIGGIVLGVLNFFNILFYI), 241 to 261 (VFAGMNIGVICLGTITGALVF), and 270 to 290 (WLGIIFSLSAIFCLYYLDKII). Positions 107–138 (ILAAFLIFHETLSQSKIIGVVLAFIGLFCLLT) constitute an EamA domain.

The protein localises to the cell membrane. This is an uncharacterized protein from Haemophilus influenzae (strain ATCC 51907 / DSM 11121 / KW20 / Rd).